We begin with the raw amino-acid sequence, 101 residues long: Small ribosomal subunit protein uS14 (101 aa).

The tract at residues 51–70 (LPRDSSPSRQRNRCRQTGRP) is disordered.

Belongs to the universal ribosomal protein uS14 family. In terms of assembly, part of the 30S ribosomal subunit. Contacts proteins S3 and S10.

Its function is as follows. Binds 16S rRNA, required for the assembly of 30S particles and may also be responsible for determining the conformation of the 16S rRNA at the A site. The protein is Small ribosomal subunit protein uS14 of Salmonella arizonae (strain ATCC BAA-731 / CDC346-86 / RSK2980).